The chain runs to 668 residues: Phosphoglycerate transport system sensor protein PgtB (668 aa).

The next 2 membrane-spanning stretches (helical) occupy residues 20–40 and 342–362; these read GAFL…LYSW and LILV…HYFI. The HAMP domain maps to 364-416; sequence SRLVKRFTALNQAVVQIGLGRTDSTIPVYGRDELGRIARLLRHTLGQLNMQRR. The Histidine kinase domain maps to 454–663; that stretch reads TLAHEINQPL…CVVLQFSVTD (210 aa). Residue His457 is modified to Phosphohistidine; by autocatalysis.

Its subcellular location is the cell inner membrane. It carries out the reaction ATP + protein L-histidine = ADP + protein N-phospho-L-histidine.. In terms of biological role, member of the two-component regulatory system PgtB/PgtA that regulates the inducible phosphoglycerate transport system. Activates PgtA by phosphorylation. This Salmonella typhimurium (strain LT2 / SGSC1412 / ATCC 700720) protein is Phosphoglycerate transport system sensor protein PgtB (pgtB).